We begin with the raw amino-acid sequence, 314 residues long: DNA-directed RNA polymerase subunit alpha (314 aa).

The interval 1–228 is alpha N-terminal domain (alpha-NTD); that stretch reads MIEIEKPVIE…EHLNIFVGLT (228 aa). Residues 245-314 form an alpha C-terminal domain (alpha-CTD) region; that stretch reads KEKVLEMTIE…ELGLGLRKEE (70 aa).

Belongs to the RNA polymerase alpha chain family. As to quaternary structure, homodimer. The RNAP catalytic core consists of 2 alpha, 1 beta, 1 beta' and 1 omega subunit. When a sigma factor is associated with the core the holoenzyme is formed, which can initiate transcription.

The catalysed reaction is RNA(n) + a ribonucleoside 5'-triphosphate = RNA(n+1) + diphosphate. Functionally, DNA-dependent RNA polymerase catalyzes the transcription of DNA into RNA using the four ribonucleoside triphosphates as substrates. The chain is DNA-directed RNA polymerase subunit alpha from Halalkalibacterium halodurans (strain ATCC BAA-125 / DSM 18197 / FERM 7344 / JCM 9153 / C-125) (Bacillus halodurans).